Consider the following 531-residue polypeptide: NADH-quinone oxidoreductase subunit N (531 aa).

Transmembrane regions (helical) follow at residues 8–28 (VEYF…AGVL), 41–61 (AQVT…IVVA), 81–101 (ATLF…VFMA), 146–166 (GATQ…MMVF), 172–192 (LLTM…MCGL), 208–228 (FLLG…LYGA), 250–270 (ALAG…AVPF), 282–302 (PTPI…GALL), 318–338 (PVLW…AVNQ), 350–370 (VAHV…GLSA), 372–392 (LFYL…VGLV), 418–438 (IVGV…LTSG), 453–473 (GAVP…YFYV), and 500–520 (AAIA…QPVL).

Belongs to the complex I subunit 2 family. As to quaternary structure, NDH-1 is composed of 14 different subunits. Subunits NuoA, H, J, K, L, M, N constitute the membrane sector of the complex.

It is found in the cell membrane. The catalysed reaction is a quinone + NADH + 5 H(+)(in) = a quinol + NAD(+) + 4 H(+)(out). Functionally, NDH-1 shuttles electrons from NADH, via FMN and iron-sulfur (Fe-S) centers, to quinones in the respiratory chain. The immediate electron acceptor for the enzyme in this species is believed to be a menaquinone. Couples the redox reaction to proton translocation (for every two electrons transferred, four hydrogen ions are translocated across the cytoplasmic membrane), and thus conserves the redox energy in a proton gradient. The chain is NADH-quinone oxidoreductase subunit N from Mycobacterium bovis (strain ATCC BAA-935 / AF2122/97).